The sequence spans 210 residues: Glutathione S-transferase P (210 aa).

Residues 2 to 81 (PPYTVVYFPV…HLGRTLGLYG (80 aa)) form the GST N-terminal domain. Tyr4 is modified (phosphotyrosine; by EGFR). Residues Tyr8, Arg14, Trp39, Lys45, and 52-53 (QL) contribute to the glutathione site. Thr62 bears the Phosphothreonine mark. 65–66 (QS) is a glutathione binding site. In terms of domain architecture, GST C-terminal spans 83 to 204 (DQREAALVDM…ASPEHVNLPI (122 aa)). Residues Lys103 and Lys116 each carry the N6-succinyllysine modification. Lys128 carries the N6-acetyllysine modification.

It belongs to the GST superfamily. Pi family. In terms of assembly, homodimer. Interacts with CDK5.

It is found in the cytoplasm. Its subcellular location is the mitochondrion. The protein resides in the nucleus. The catalysed reaction is RX + glutathione = an S-substituted glutathione + a halide anion + H(+). It carries out the reaction prostaglandin J2 + glutathione = prostaglandin J2-S-(R)-glutathione. It catalyses the reaction prostaglandin J2 + glutathione = prostaglandin J2-S-(S)-glutathione. The enzyme catalyses prostaglandin A2 + glutathione = prostaglandin A2-S-(S)-glutathione. The catalysed reaction is 11(S)-hydroxy-14(S),15(S)-epoxy-(5Z,8Z,12E)-eicosatrienoate + glutathione = (11S,15S)-dihydroxy-14(R)-S-glutathionyl-(5Z,8Z,12E)-eicosatrienoate. Its function is as follows. Conjugation of reduced glutathione to a wide number of exogenous and endogenous hydrophobic electrophiles. Involved in the formation of glutathione conjugates of both prostaglandin A2 (PGA2) and prostaglandin J2 (PGJ2). Participates in the formation of novel hepoxilin regioisomers. Negatively regulates CDK5 activity via p25/p35 translocation to prevent neurodegeneration. The sequence is that of Glutathione S-transferase P (GSTP1) from Pongo abelii (Sumatran orangutan).